The chain runs to 378 residues: Protein RecA (378 aa).

An ATP-binding site is contributed by 66–73 (GPESSGKT). Residues 333–378 (PDAAKAEAATDAAAAADTAGTDDAAKSVPAPASKTAKATKATAVKS) form a disordered region. Residues 338-378 (AEAATDAAAAADTAGTDDAAKSVPAPASKTAKATKATAVKS) show a composition bias toward low complexity.

It belongs to the RecA family.

It localises to the cytoplasm. Its function is as follows. Can catalyze the hydrolysis of ATP in the presence of single-stranded DNA, the ATP-dependent uptake of single-stranded DNA by duplex DNA, and the ATP-dependent hybridization of homologous single-stranded DNAs. It interacts with LexA causing its activation and leading to its autocatalytic cleavage. The polypeptide is Protein RecA (Streptomyces venezuelae (strain ATCC 10712 / CBS 650.69 / DSM 40230 / JCM 4526 / NBRC 13096 / PD 04745)).